Reading from the N-terminus, the 479-residue chain is FAD-dependent monooxygenase cdmI (479 aa).

Residues glutamate 43, glycine 57, and arginine 116 each coordinate FAD. N-linked (GlcNAc...) asparagine glycosylation is found at asparagine 156 and asparagine 198. FAD contacts are provided by aspartate 315 and alanine 328. Residues 453–473 form a helical membrane-spanning segment; the sequence is PFILAVLAGLGFLLTMFKQQW.

Belongs to the paxM FAD-dependent monooxygenase family. It depends on FAD as a cofactor.

Its subcellular location is the membrane. The catalysed reaction is verruculide C + AH2 + O2 = verruculide C epoxide + A + H2O. The protein operates within secondary metabolite biosynthesis; terpenoid biosynthesis. FAD-dependent monooxygenase; part of the gene cluster that mediates the biosynthesis of chrodrimanin B, a meroterpenoid that acts as a potent blocker of insect GABA-gated chloride channels. The first step of the pathway is the biosynthesis of 6-hydroxymellein by the polyketide synthase cdmE. The prenyltransferase cdmH acts as a 6-hydroxymellein 5-farnesyltransferase and produces the hydrophobic metabolite verruculide C. The FAD-dependent monooxygenase cdmI further converts verruculide C into verruculide B. The terpene cyclase cdmG then produced the pentacyclic molecule 3-hydroxypentacecilide A, the backbone structure of chrodrimanin B, via folding the farnesyl moiety of the substrate into the chair-boat conformation. The short-chain dehydrogenase/reductase cdmF functions as the 3-OH dehydrogenase that oxidizes the C-3 hydroxyl group of 3-hydroxypentacecilide A and produces chrodrimanin C, the dehydrogenated product of 3-hydroxypentacecilide A. The cytochrome P450 monooxygenase cdmJ then accepts both 3-hydroxypentacecilide A and chrodrimanin C and functions as a C-7-beta-hydroxylase to produce respectively chrodrimanin H and chrodrimanin F. The dioxygenase cdmA accepts chrodrimanin H to afford chrodrimanin E, which is further transformed to chrodrimanin A by the dioxygenase cdmD. CdmA can also accept chrodrimanin C as substrate to convert it into verruculide A, which is further converted into chrodrimanin T by cdmD. The last step of the biosynthesis is proposed to be performed by the acetyltransferase cdmC which acetylates chrodrimanin A to yield chrodrimanin B. The pathway may also lead to the production of additional shunt products, including chrodrimanins T and U. This Talaromyces verruculosus (Penicillium verruculosum) protein is FAD-dependent monooxygenase cdmI.